The primary structure comprises 423 residues: Glutamyl-tRNA(Gln) amidotransferase subunit A (423 aa).

The interval 1-20 is disordered; that stretch reads MSHNAFITEETIEPTDDGPL. Residues 10–19 are compositionally biased toward acidic residues; that stretch reads ETIEPTDDGP. Active-site charge relay system residues include Lys-28 and Ser-103. Residues 75–108 form a disordered region; sequence EFGMGTTTETSAFGPTENPAAEGRVPGGSSGGSA. The Acyl-ester intermediate role is filled by Ser-127. The segment at 183 to 206 is disordered; it reads DERDGTTREPPAGQPTYADAADGD.

This sequence belongs to the amidase family. GatA subfamily. In terms of assembly, heterotrimer of A, B and C subunits.

It catalyses the reaction L-glutamyl-tRNA(Gln) + L-glutamine + ATP + H2O = L-glutaminyl-tRNA(Gln) + L-glutamate + ADP + phosphate + H(+). Allows the formation of correctly charged Gln-tRNA(Gln) through the transamidation of misacylated Glu-tRNA(Gln) in organisms which lack glutaminyl-tRNA synthetase. The reaction takes place in the presence of glutamine and ATP through an activated gamma-phospho-Glu-tRNA(Gln). The sequence is that of Glutamyl-tRNA(Gln) amidotransferase subunit A from Natronomonas pharaonis (strain ATCC 35678 / DSM 2160 / CIP 103997 / JCM 8858 / NBRC 14720 / NCIMB 2260 / Gabara) (Halobacterium pharaonis).